We begin with the raw amino-acid sequence, 202 residues long: Large ribosomal subunit protein bL9 (202 aa).

The interval 176 to 202 (AAGEFFDPDAQHDDEPAAEDDQNAEEK) is disordered. Residues 191–202 (PAAEDDQNAEEK) show a composition bias toward acidic residues.

Belongs to the bacterial ribosomal protein bL9 family.

Functionally, binds to the 23S rRNA. The polypeptide is Large ribosomal subunit protein bL9 (Nitrobacter winogradskyi (strain ATCC 25391 / DSM 10237 / CIP 104748 / NCIMB 11846 / Nb-255)).